A 348-amino-acid chain; its full sequence is Holliday junction branch migration complex subunit RuvB (348 aa).

The tract at residues A4–Y184 is large ATPase domain (RuvB-L). ATP contacts are provided by residues I23, R24, G65, K68, T69, T70, E131–F133, R174, Y184, and R221. T69 contributes to the Mg(2+) binding site. The small ATPAse domain (RuvB-S) stretch occupies residues S185–D255. Positions E258–E348 are head domain (RuvB-H). DNA-binding residues include R294, R313, and R318.

This sequence belongs to the RuvB family. As to quaternary structure, homohexamer. Forms an RuvA(8)-RuvB(12)-Holliday junction (HJ) complex. HJ DNA is sandwiched between 2 RuvA tetramers; dsDNA enters through RuvA and exits via RuvB. An RuvB hexamer assembles on each DNA strand where it exits the tetramer. Each RuvB hexamer is contacted by two RuvA subunits (via domain III) on 2 adjacent RuvB subunits; this complex drives branch migration. In the full resolvosome a probable DNA-RuvA(4)-RuvB(12)-RuvC(2) complex forms which resolves the HJ.

It is found in the cytoplasm. The catalysed reaction is ATP + H2O = ADP + phosphate + H(+). In terms of biological role, the RuvA-RuvB-RuvC complex processes Holliday junction (HJ) DNA during genetic recombination and DNA repair, while the RuvA-RuvB complex plays an important role in the rescue of blocked DNA replication forks via replication fork reversal (RFR). RuvA specifically binds to HJ cruciform DNA, conferring on it an open structure. The RuvB hexamer acts as an ATP-dependent pump, pulling dsDNA into and through the RuvAB complex. RuvB forms 2 homohexamers on either side of HJ DNA bound by 1 or 2 RuvA tetramers; 4 subunits per hexamer contact DNA at a time. Coordinated motions by a converter formed by DNA-disengaged RuvB subunits stimulates ATP hydrolysis and nucleotide exchange. Immobilization of the converter enables RuvB to convert the ATP-contained energy into a lever motion, pulling 2 nucleotides of DNA out of the RuvA tetramer per ATP hydrolyzed, thus driving DNA branch migration. The RuvB motors rotate together with the DNA substrate, which together with the progressing nucleotide cycle form the mechanistic basis for DNA recombination by continuous HJ branch migration. Branch migration allows RuvC to scan DNA until it finds its consensus sequence, where it cleaves and resolves cruciform DNA. In Pseudomonas putida (strain GB-1), this protein is Holliday junction branch migration complex subunit RuvB.